The sequence spans 230 residues: Probable GTP-binding protein EngB (230 aa).

The 189-residue stretch at 36–224 folds into the EngB-type G domain; sequence ERPKVIVMGR…KHRINKRINI (189 aa). GTP-binding positions include 44-51, 69-73, 86-89, 166-169, and 201-203; these read GRSNVGKS, GVTLK, DLPG, NKMD, and VPA. Positions 51 and 71 each coordinate Mg(2+).

Belongs to the TRAFAC class TrmE-Era-EngA-EngB-Septin-like GTPase superfamily. EngB GTPase family. The cofactor is Mg(2+).

In terms of biological role, necessary for normal cell division and for the maintenance of normal septation. The polypeptide is Probable GTP-binding protein EngB (Methanococcus maripaludis (strain DSM 14266 / JCM 13030 / NBRC 101832 / S2 / LL)).